A 219-amino-acid polypeptide reads, in one-letter code: uncharacterized protein (219 aa).

3 stretches are compositionally biased toward basic and acidic residues: residues Met1–Arg20, Ala30–Val39, and Gln156–Arg170. A disordered region spans residues Met1 to Gly195.

This sequence belongs to the MISP family.

This is an uncharacterized protein from Homo sapiens (Human).